The chain runs to 351 residues: Secreted frizzled-related sequence protein 4 (351 aa).

A signal peptide spans 1–18; it reads MLRSILVALCLWLRLALG. The region spanning 19–139 is the FZ domain; it reads VRGAPCEAVR…VYDRGVCISP (121 aa). Cystine bridges form between Cys24–Cys85, Cys32–Cys78, Cys69–Cys108, Cys97–Cys136, and Cys101–Cys125. N-linked (GlcNAc...) asparagine glycans are attached at residues Asn38 and Asn68. N-linked (GlcNAc...) asparagine glycans are attached at residues Asn116, Asn194, and Asn240. Residues 178–306 form the NTR domain; the sequence is CKCKKVKPTL…TIQDKKQIAS (129 aa). Basic and acidic residues predominate over residues 293–303; that stretch reads EQQRTIQDKKQ. Residues 293 to 351 are disordered; the sequence is EQQRTIQDKKQIASRTSRTSRSNPPKSKGRPPAPKPASPKKNIKARSAPKKSNLKKSAS. The segment covering 306–318 has biased composition (low complexity); it reads SRTSRTSRSNPPK. Basic residues predominate over residues 333–351; sequence KNIKARSAPKKSNLKKSAS.

The protein belongs to the secreted frizzled-related protein (sFRP) family. In terms of tissue distribution, expressed in the ovary. Localized to granulosa cells of periovulatory follicles and corpora lutea. Weakly expressed in adult tissues including kidney, brain and lung.

The protein localises to the secreted. In terms of biological role, soluble frizzled-related proteins (sFRPS) function as modulators of Wnt signaling through direct interaction with Wnts. They have a role in regulating cell growth and differentiation in specific cell types. SFRP4 plays a role in bone morphogenesis. May also act as a regulator of adult uterine morphology and function. May also increase apoptosis during ovulation possibly through modulation of FZ1/FZ4/WNT4 signaling. Has phosphaturic effects by specifically inhibiting sodium-dependent phosphate uptake. The protein is Secreted frizzled-related sequence protein 4 (Sfrp4) of Mus musculus (Mouse).